The chain runs to 147 residues: uncharacterized protein (147 aa).

Belongs to the RTX toxin acyltransferase family.

This is an uncharacterized protein from Synechocystis sp. (strain ATCC 27184 / PCC 6803 / Kazusa).